Reading from the N-terminus, the 64-residue chain is Large ribosomal subunit protein bL35 (64 aa).

The tract at residues 22-44 is disordered; that stretch reads IMKQQAGMRHNLEVKSSKRKARL.

Belongs to the bacterial ribosomal protein bL35 family.

This is Large ribosomal subunit protein bL35 from Clavibacter sepedonicus (Clavibacter michiganensis subsp. sepedonicus).